Here is a 249-residue protein sequence, read N- to C-terminus: DNA repair protein RecO (249 aa).

This sequence belongs to the RecO family.

Functionally, involved in DNA repair and RecF pathway recombination. The polypeptide is DNA repair protein RecO (Sinorhizobium medicae (strain WSM419) (Ensifer medicae)).